A 153-amino-acid chain; its full sequence is Actin-related protein 2/3 complex subunit 5-like protein (153 aa).

Ser64 is modified (phosphoserine).

It belongs to the ARPC5 family. As to quaternary structure, may be a component of the Arp2/3 complex in which it may replace ARPC5.

Its subcellular location is the cytoplasm. It localises to the cytoskeleton. May function as component of the Arp2/3 complex which is involved in regulation of actin polymerization and together with an activating nucleation-promoting factor (NPF) mediates the formation of branched actin networks. The protein is Actin-related protein 2/3 complex subunit 5-like protein (ARPC5L) of Pongo abelii (Sumatran orangutan).